A 571-amino-acid polypeptide reads, in one-letter code: Urease subunit alpha (571 aa).

The region spanning 131–571 (GGIDAHIHFI…LPMAQRYFLF (441 aa)) is the Urease domain. Positions 136, 138, and 219 each coordinate Ni(2+). At lysine 219 the chain carries N6-carboxylysine. Histidine 221 provides a ligand contact to substrate. Residues histidine 248 and histidine 274 each contribute to the Ni(2+) site. Histidine 322 acts as the Proton donor in catalysis. Aspartate 362 contacts Ni(2+).

The protein belongs to the metallo-dependent hydrolases superfamily. Urease alpha subunit family. As to quaternary structure, heterotrimer of UreA (gamma), UreB (beta) and UreC (alpha) subunits. Three heterotrimers associate to form the active enzyme. Ni cation serves as cofactor. Carboxylation allows a single lysine to coordinate two nickel ions.

The protein resides in the cytoplasm. It carries out the reaction urea + 2 H2O + H(+) = hydrogencarbonate + 2 NH4(+). Its pathway is nitrogen metabolism; urea degradation; CO(2) and NH(3) from urea (urease route): step 1/1. This chain is Urease subunit alpha, found in Nostoc punctiforme (strain ATCC 29133 / PCC 73102).